The primary structure comprises 601 residues: Zinc finger protein 37 (601 aa).

In terms of domain architecture, KRAB spans Met-1–Ser-70. Phosphothreonine is present on Thr-3. A Phosphoserine modification is found at Ser-9. Positions Glu-30–Pro-43 are enriched in polar residues. The tract at residues Glu-30–Gly-254 is disordered. Positions Ser-60–Ser-70 are enriched in low complexity. Residues Thr-77–Ala-88 are compositionally biased toward polar residues. 3 stretches are compositionally biased toward basic and acidic residues: residues Lys-115–Lys-136, Lys-164–Lys-174, and Val-183–Lys-238. The C2H2-type 1 zinc finger occupies Tyr-257–His-279. The segment at Tyr-285–His-303 adopts a C2H2-type 2; atypical zinc-finger fold. 10 C2H2-type zinc fingers span residues Tyr-314–His-337, Tyr-343–His-365, Tyr-371–His-393, Tyr-399–His-421, Phe-427–His-449, Tyr-455–His-477, Phe-483–His-505, Tyr-511–His-533, Phe-539–His-561, and Tyr-570–His-592.

The protein belongs to the krueppel C2H2-type zinc-finger protein family. As to expression, expressed in testes, brain, kidney, spleen, thymus, lung, and at low levels in liver.

Its subcellular location is the nucleus. Its function is as follows. May be involved in transcriptional regulation. This chain is Zinc finger protein 37 (Zfp37), found in Rattus norvegicus (Rat).